Consider the following 572-residue polypeptide: Urease subunit alpha (572 aa).

Residues 136–572 form the Urease domain; it reads GGIDTHIHWI…VPLAQRYFLF (437 aa). Residues histidine 141, histidine 143, and lysine 224 each coordinate Ni(2+). Lysine 224 is subject to N6-carboxylysine. A substrate-binding site is contributed by histidine 226. Ni(2+) contacts are provided by histidine 253 and histidine 279. Histidine 327 functions as the Proton donor in the catalytic mechanism. A Ni(2+)-binding site is contributed by aspartate 367.

It belongs to the metallo-dependent hydrolases superfamily. Urease alpha subunit family. As to quaternary structure, heterotrimer of UreA (gamma), UreB (beta) and UreC (alpha) subunits. Three heterotrimers associate to form the active enzyme. Ni cation is required as a cofactor. Carboxylation allows a single lysine to coordinate two nickel ions.

Its subcellular location is the cytoplasm. It carries out the reaction urea + 2 H2O + H(+) = hydrogencarbonate + 2 NH4(+). It participates in nitrogen metabolism; urea degradation; CO(2) and NH(3) from urea (urease route): step 1/1. The sequence is that of Urease subunit alpha from Actinobacillus pleuropneumoniae serotype 3 (strain JL03).